The chain runs to 198 residues: Dual specificity protein phosphatase 1 (198 aa).

A disordered region spans residues 1–20 (MSSRDRGSPSSSSSSSSLPG). The segment covering 8–17 (SPSSSSSSSS) has biased composition (low complexity). The segment at 26–47 (EKVKNQIQALVRVIKVARTYRD) is caM binding domain 1. The Tyrosine-protein phosphatase domain maps to 50–191 (VPSLIEQGLY…LQDLEKSMQV (142 aa)). Cys-135 serves as the catalytic Phosphocysteine intermediate. Residues 151–180 (MKKHGMTLAQALQHVKSKRPVASPNAGFIR) form a caM binding domain 2 region.

This sequence belongs to the protein-tyrosine phosphatase family. Non-receptor class dual specificity subfamily. In terms of assembly, interacts with calmodulin (CaM) in a calcium Ca(2+)-dependent manner. Expressed in roots, stems, leaves and flowers.

It localises to the nucleus. Its subcellular location is the cytoplasm. The catalysed reaction is O-phospho-L-tyrosyl-[protein] + H2O = L-tyrosyl-[protein] + phosphate. The enzyme catalyses O-phospho-L-seryl-[protein] + H2O = L-seryl-[protein] + phosphate. It carries out the reaction O-phospho-L-threonyl-[protein] + H2O = L-threonyl-[protein] + phosphate. With respect to regulation, inhibited by sodium vanadate and sodium tungstate. NaF and spermifine repress specifically phosphoserine and phosphothreonine phosphatase activity. Has a dual specificity toward Ser/Thr and Tyr-containing proteins. Dephosphorylates MPK4 in vitro. This is Dual specificity protein phosphatase 1 (DSPTP1) from Arabidopsis thaliana (Mouse-ear cress).